Reading from the N-terminus, the 848-residue chain is Alanine--tRNA ligase (848 aa).

Zn(2+) is bound by residues His-553, His-557, Cys-654, and His-658.

The protein belongs to the class-II aminoacyl-tRNA synthetase family. Zn(2+) is required as a cofactor.

It localises to the cytoplasm. It catalyses the reaction tRNA(Ala) + L-alanine + ATP = L-alanyl-tRNA(Ala) + AMP + diphosphate. In terms of biological role, catalyzes the attachment of alanine to tRNA(Ala) in a two-step reaction: alanine is first activated by ATP to form Ala-AMP and then transferred to the acceptor end of tRNA(Ala). Also edits incorrectly charged Ser-tRNA(Ala) and Gly-tRNA(Ala) via its editing domain. The chain is Alanine--tRNA ligase from Neorickettsia sennetsu (strain ATCC VR-367 / Miyayama) (Ehrlichia sennetsu).